The primary structure comprises 245 residues: Probable transcriptional regulatory protein MAG6590 (245 aa).

This sequence belongs to the TACO1 family.

The protein resides in the cytoplasm. The polypeptide is Probable transcriptional regulatory protein MAG6590 (Mycoplasmopsis agalactiae (strain NCTC 10123 / CIP 59.7 / PG2) (Mycoplasma agalactiae)).